Consider the following 1031-residue polypeptide: MEVDVDNQADNHGIHSALKTCEEIKEAKTLYSWIQKVIRCRNQSQSHYKDLEDIKIFAQTNIVATPRDYNEEDFKVIARKEVFSTGLMIELIDKCLVELLSSSDVSDRQKLQCFGFQLKGNQLAKTHLLTALSTQKQYFFQDEWNQVRAMIGNELFRHLYTKYLIFQRTSEGTLVQFCGNNVFDHLKVNDKFDKKQKGGAADMNEPRCCSTCKYNVKNEKDHFLNNINVPNWNNMKSRTRIFYCTHFNRNNQFFKKHEFVSNKNNISAMDRAQTIFTNIFRFNRIRKKLKDKVIEKIAYMLEKVKDFNFNYYLTKSCPLPENWRERKQKIENLINKTREEKSKYYEELFSYTTDNKCVTQFINEFFYNILPKDFLTGRNRKNFQKKVKKYVELNKHELIHKNLLLEKINTREISWMQVETSAKHFYYFDHENIYVLWKLLRWIFEDLVVSLIRCFFYVTEQQKSYSKTYYYRKNIWDVIMKMSIADLKKETLAEVQEKEVEEWKKSLGFAPGKLRLIPKKTTFRPIMTFNKKIVNSDRKTTKLTTNTKLLNSHLMLKTLKNRMFKDPFGFAVFNYDDVMKKYEEFVCKWKQVGQPKLFFATMDIEKCYDSVNREKLSTFLKTTKLLSSDFWIMTAQILKRKNNIVIDSKNFRKKEMKDYFRQKFQKIALEGGQYPTLFSVLENEQNDLNAKKTLIVEAKQRNYFKKDNLLQPVINICQYNYINFNGKFYKQTKGIPQGLCVSSILSSFYYATLEESSLGFLRDESMNPENPNVNLLMRLTDDYLLITTQENNAVLFIEKLINVSRENGFKFNMKKLQTSFPLSPSKFAKYGMDSVEEQNIVQDYCDWIGISIDMKTLALMPNINLRIEGILCTLNLNMQTKKASMWLKKKLKSFLMNNITHYFRKTITTEDFANKTLNKLFISGGYKYMQCAKEYKDHFKKNLAMSSMIDLEVSKIIYSVTRAFFKYLVCNIKDTIFGEEHYPDFFLSTLKHFIEIFSTKKYIFNRVCMILKAKEAKLKSDQCQSLIQYDA.

The Reverse transcriptase domain occupies 498–852 (KEVEEWKKSL…DYCDWIGISI (355 aa)). Mg(2+) is bound by residues D603, D781, and D782.

It belongs to the reverse transcriptase family. Telomerase subfamily. As to quaternary structure, component of the telomerase holoenzyme complex composed minimally of the catalytic subunit p123 and the telomerase RNA template component.

The protein resides in the nucleus. It localises to the chromosome. Its subcellular location is the telomere. The catalysed reaction is DNA(n) + a 2'-deoxyribonucleoside 5'-triphosphate = DNA(n+1) + diphosphate. In terms of biological role, telomerase is a ribonucleoprotein enzyme essential for the replication of chromosome termini in most eukaryotes. It elongates telomeres. It is a reverse transcriptase that adds simple sequence repeats to chromosome ends by copying a template sequence within the RNA component of the enzyme. The polypeptide is Telomerase reverse transcriptase (Euplotes aediculatus (Ciliate)).